Reading from the N-terminus, the 177-residue chain is ATP synthase subunit delta (177 aa).

It belongs to the ATPase delta chain family. In terms of assembly, F-type ATPases have 2 components, F(1) - the catalytic core - and F(0) - the membrane proton channel. F(1) has five subunits: alpha(3), beta(3), gamma(1), delta(1), epsilon(1). F(0) has three main subunits: a(1), b(2) and c(10-14). The alpha and beta chains form an alternating ring which encloses part of the gamma chain. F(1) is attached to F(0) by a central stalk formed by the gamma and epsilon chains, while a peripheral stalk is formed by the delta and b chains.

Its subcellular location is the cell inner membrane. Its function is as follows. F(1)F(0) ATP synthase produces ATP from ADP in the presence of a proton or sodium gradient. F-type ATPases consist of two structural domains, F(1) containing the extramembraneous catalytic core and F(0) containing the membrane proton channel, linked together by a central stalk and a peripheral stalk. During catalysis, ATP synthesis in the catalytic domain of F(1) is coupled via a rotary mechanism of the central stalk subunits to proton translocation. Functionally, this protein is part of the stalk that links CF(0) to CF(1). It either transmits conformational changes from CF(0) to CF(1) or is implicated in proton conduction. The chain is ATP synthase subunit delta from Shewanella sp. (strain MR-4).